The chain runs to 149 residues: Histone H3-like 1 (149 aa).

Residues 1–19 show a composition bias toward basic and acidic residues; it reads MARPRKEAPQRNLDRDENA. Positions 1–58 are disordered; it reads MARPRKEAPQRNLDRDENARQQPTEEPQDEAPRNQGRQQQQQRPPAAPRRPRRFRPGT. Residues 33–44 show a composition bias toward low complexity; the sequence is RNQGRQQQQQRP.

This sequence belongs to the histone H3 family. In terms of assembly, the nucleosome is a histone octamer containing two molecules each of H2A, H2B, H3 and H4 assembled in one H3-H4 heterotetramer and two H2A-H2B heterodimers. The octamer wraps approximately 147 bp of DNA. As to expression, pollen specific.

The protein resides in the nucleus. The protein localises to the chromosome. In terms of biological role, core component of nucleosome. Nucleosomes wrap and compact DNA into chromatin, limiting DNA accessibility to the cellular machineries which require DNA as a template. Histones thereby play a central role in transcription regulation, DNA repair, DNA replication and chromosomal stability. DNA accessibility is regulated via a complex set of post-translational modifications of histones, also called histone code, and nucleosome remodeling. The chain is Histone H3-like 1 (gH3) from Lilium longiflorum (Trumpet lily).